The sequence spans 412 residues: Poly-beta-1,6-N-acetyl-D-glucosamine synthase (412 aa).

4 helical membrane passes run Leu7–Ile28, Ile298–Ile320, Ile332–Ile354, and Val364–Met386.

Belongs to the glycosyltransferase 2 family.

Its subcellular location is the cell membrane. Its function is as follows. N-acetylglucosaminyltransferase that catalyzes the polymerization of single monomer units of UDP-N-acetylglucosamine to produce the linear homomer poly-beta-1,6-N-acetyl-D-glucosamine (PNAG, also referred to as PIA), a biofilm adhesin polysaccharide. Requires IcaD for full activity. The chain is Poly-beta-1,6-N-acetyl-D-glucosamine synthase (icaA) from Staphylococcus epidermidis (strain ATCC 35984 / DSM 28319 / BCRC 17069 / CCUG 31568 / BM 3577 / RP62A).